The chain runs to 406 residues: Argininosuccinate synthase (406 aa).

Residues 12–20 (AYSGGLDTS) and alanine 39 contribute to the ATP site. L-citrulline contacts are provided by tyrosine 90 and serine 95. An ATP-binding site is contributed by glycine 120. The L-aspartate site is built by threonine 122, asparagine 126, and aspartate 127. Asparagine 126 lines the L-citrulline pocket. Residues arginine 130, serine 179, serine 188, glutamate 264, and tyrosine 276 each coordinate L-citrulline.

Belongs to the argininosuccinate synthase family. Type 1 subfamily. In terms of assembly, homotetramer.

It is found in the cytoplasm. The catalysed reaction is L-citrulline + L-aspartate + ATP = 2-(N(omega)-L-arginino)succinate + AMP + diphosphate + H(+). The protein operates within amino-acid biosynthesis; L-arginine biosynthesis; L-arginine from L-ornithine and carbamoyl phosphate: step 2/3. The protein is Argininosuccinate synthase of Citrifermentans bemidjiense (strain ATCC BAA-1014 / DSM 16622 / JCM 12645 / Bem) (Geobacter bemidjiensis).